An 85-amino-acid polypeptide reads, in one-letter code: U4-theraphotoxin-Hhn1l (85 aa).

Residues 1–22 (MKVTLIAFLTCAAVLVLHTTAA) form the signal peptide. The propeptide occupies 23-48 (EELEAESQLMGVGMPDTELAAVDEER). 3 disulfides stabilise this stretch: C52–C66, C56–C77, and C71–C82.

It belongs to the neurotoxin 12 (Hwtx-2) family. 02 (Hwtx-2) subfamily. In terms of tissue distribution, expressed by the venom gland.

Its subcellular location is the secreted. In terms of biological role, postsynaptic neurotoxin. The chain is U4-theraphotoxin-Hhn1l from Cyriopagopus hainanus (Chinese bird spider).